Here is a 233-residue protein sequence, read N- to C-terminus: 7-cyano-7-deazaguanine synthase (233 aa).

13 to 23 (LSGGLDSTTCL) contributes to the ATP binding site. Zn(2+) contacts are provided by Cys197, Cys206, Cys209, and Cys212.

It belongs to the QueC family. Requires Zn(2+) as cofactor.

The enzyme catalyses 7-carboxy-7-deazaguanine + NH4(+) + ATP = 7-cyano-7-deazaguanine + ADP + phosphate + H2O + H(+). Its pathway is purine metabolism; 7-cyano-7-deazaguanine biosynthesis. Functionally, catalyzes the ATP-dependent conversion of 7-carboxy-7-deazaguanine (CDG) to 7-cyano-7-deazaguanine (preQ(0)). The chain is 7-cyano-7-deazaguanine synthase from Anaeromyxobacter sp. (strain Fw109-5).